We begin with the raw amino-acid sequence, 401 residues long: MKTLWKHCHIASMAHGKYSIIEDAAIVTSGALIEWIGPQAELAEPEHDNCIDLGGAWVTPGLIDCHTHTVFGGNRSGEFEQRLQGVSYAEIAAAGGGIASTVRATRAASEDELYASAERRLRHLLKDGVTTVEMKSGYGLDLENERKILRVIRRLGNTQPVTVRATCLAAHALPPEYADRADDFINHICNEMLPALAAEGLVDAVDAFCEYLAFSPEQVERVFITAGQLALPVKLHAEQLSSLGGSSLAARYNALSADHLEFMTEDDAIAMAAAGTVAVLLPGAFYFLRETQLPPMDALRKHGVPIAISTDLNPGTSPGLSLRLMLNMACTLFRMTPEEALAGVTFNAAKALGMSATHGSLEVGKVADFVAWNIERPADLGYWLGGDLDKRIVRHGVESSI.

The Fe(3+) site is built by His66 and His68. Residues His66 and His68 each contribute to the Zn(2+) site. 3 residues coordinate 4-imidazolone-5-propanoate: Arg75, Tyr138, and His171. Position 138 (Tyr138) interacts with N-formimidoyl-L-glutamate. His236 contacts Fe(3+). His236 lines the Zn(2+) pocket. A 4-imidazolone-5-propanoate-binding site is contributed by Gln239. Asp311 is a binding site for Fe(3+). Asp311 is a binding site for Zn(2+). N-formimidoyl-L-glutamate contacts are provided by Asn313 and Gly315. Thr316 provides a ligand contact to 4-imidazolone-5-propanoate.

This sequence belongs to the metallo-dependent hydrolases superfamily. HutI family. Requires Zn(2+) as cofactor. Fe(3+) serves as cofactor.

It is found in the cytoplasm. It carries out the reaction 4-imidazolone-5-propanoate + H2O = N-formimidoyl-L-glutamate. It functions in the pathway amino-acid degradation; L-histidine degradation into L-glutamate; N-formimidoyl-L-glutamate from L-histidine: step 3/3. Catalyzes the hydrolytic cleavage of the carbon-nitrogen bond in imidazolone-5-propanoate to yield N-formimidoyl-L-glutamate. It is the third step in the universal histidine degradation pathway. The sequence is that of Imidazolonepropionase from Pseudomonas syringae pv. tomato (strain ATCC BAA-871 / DC3000).